The primary structure comprises 256 residues: Glutamate racemase (256 aa).

Residues 5–6 (DS) and 37–38 (YG) contribute to the substrate site. C69 (proton donor/acceptor) is an active-site residue. Residue 70–71 (NT) coordinates substrate. C181 acts as the Proton donor/acceptor in catalysis. 182–183 (TH) is a binding site for substrate.

This sequence belongs to the aspartate/glutamate racemases family.

It carries out the reaction L-glutamate = D-glutamate. It functions in the pathway cell wall biogenesis; peptidoglycan biosynthesis. Provides the (R)-glutamate required for cell wall biosynthesis. The polypeptide is Glutamate racemase (Buchnera aphidicola subsp. Schizaphis graminum (strain Sg)).